Here is a 788-residue protein sequence, read N- to C-terminus: Protein FAR1-RELATED SEQUENCE 12 (788 aa).

The FAR1 1 domain maps to 57-133 (EFYNAYAART…QKEHNHELGG (77 aa)). The disordered stretch occupies residues 127 to 200 (HNHELGGEGS…GEVSDDHHQT (74 aa)). Over residues 142–151 (PRPSRAPAPT) the composition is skewed to low complexity. A compositionally biased stretch (basic and acidic residues) spans 165–175 (KVVDESDRETR). Positions 225 to 301 (QFYQAYAEVV…NKDHNHDLEP (77 aa)) constitute an FAR1 2 domain. One can recognise an MULE domain in the interval 399-495 (SVVFDTSYRK…SAWQIREKER (97 aa)). The SWIM-type zinc-finger motif lies at 674 to 710 (HAVTFSASNLNSSCSCQMFEHEGLLCRHILKVFNLLD).

The protein belongs to the FHY3/FAR1 family. As to expression, expressed in hypocotyls, rosette and cauline leaves, inflorescences stems, flowers and siliques.

Its subcellular location is the nucleus. Putative transcription activator involved in regulating light control of development. The sequence is that of Protein FAR1-RELATED SEQUENCE 12 (FRS12) from Arabidopsis thaliana (Mouse-ear cress).